A 256-amino-acid polypeptide reads, in one-letter code: Imidazole glycerol phosphate synthase subunit HisF (256 aa).

Residues Asp-12 and Asp-131 contribute to the active site.

This sequence belongs to the HisA/HisF family. Heterodimer of HisH and HisF.

Its subcellular location is the cytoplasm. It catalyses the reaction 5-[(5-phospho-1-deoxy-D-ribulos-1-ylimino)methylamino]-1-(5-phospho-beta-D-ribosyl)imidazole-4-carboxamide + L-glutamine = D-erythro-1-(imidazol-4-yl)glycerol 3-phosphate + 5-amino-1-(5-phospho-beta-D-ribosyl)imidazole-4-carboxamide + L-glutamate + H(+). The protein operates within amino-acid biosynthesis; L-histidine biosynthesis; L-histidine from 5-phospho-alpha-D-ribose 1-diphosphate: step 5/9. Functionally, IGPS catalyzes the conversion of PRFAR and glutamine to IGP, AICAR and glutamate. The HisF subunit catalyzes the cyclization activity that produces IGP and AICAR from PRFAR using the ammonia provided by the HisH subunit. This chain is Imidazole glycerol phosphate synthase subunit HisF, found in Thermobifida fusca (strain YX).